The primary structure comprises 175 residues: ATP-dependent protease subunit HslV (175 aa).

Thr-2 is an active-site residue. Na(+) contacts are provided by Ala-156, Cys-159, and Thr-162.

Belongs to the peptidase T1B family. HslV subfamily. In terms of assembly, a double ring-shaped homohexamer of HslV is capped on each side by a ring-shaped HslU homohexamer. The assembly of the HslU/HslV complex is dependent on binding of ATP.

It localises to the cytoplasm. The enzyme catalyses ATP-dependent cleavage of peptide bonds with broad specificity.. Allosterically activated by HslU binding. Protease subunit of a proteasome-like degradation complex believed to be a general protein degrading machinery. This Rhizobium etli (strain CIAT 652) protein is ATP-dependent protease subunit HslV.